We begin with the raw amino-acid sequence, 151 residues long: Ribosome maturation factor RimP (151 aa).

Belongs to the RimP family.

It localises to the cytoplasm. In terms of biological role, required for maturation of 30S ribosomal subunits. This is Ribosome maturation factor RimP from Caldanaerobacter subterraneus subsp. tengcongensis (strain DSM 15242 / JCM 11007 / NBRC 100824 / MB4) (Thermoanaerobacter tengcongensis).